The chain runs to 450 residues: Chromosomal replication initiator protein DnaA 2 (450 aa).

Residues 1 to 87 (MLTCNECTTW…LEFVVAEHKK (87 aa)) are domain I, interacts with DnaA modulators. Residues 87–114 (KPSAPVASQKESNEGISEVFEETKDFEL) form a domain II region. The interval 115 to 330 (KLNLSYRFDN…GAINKLTAYC (216 aa)) is domain III, AAA+ region. 4 residues coordinate ATP: Gly-159, Gly-161, Lys-162, and Thr-163. A domain IV, binds dsDNA region spans residues 331–450 (RLFGKSLTET…VNLCKNHIVG (120 aa)).

Belongs to the DnaA family. As to quaternary structure, oligomerizes as a right-handed, spiral filament on DNA at oriC.

Its subcellular location is the cytoplasm. Its function is as follows. Plays an essential role in the initiation and regulation of chromosomal replication. ATP-DnaA binds to the origin of replication (oriC) to initiate formation of the DNA replication initiation complex once per cell cycle. Binds the DnaA box (a 9 base pair repeat at the origin) and separates the double-stranded (ds)DNA. Forms a right-handed helical filament on oriC DNA; dsDNA binds to the exterior of the filament while single-stranded (ss)DNA is stabiized in the filament's interior. The ATP-DnaA-oriC complex binds and stabilizes one strand of the AT-rich DNA unwinding element (DUE), permitting loading of DNA polymerase. After initiation quickly degrades to an ADP-DnaA complex that is not apt for DNA replication. Binds acidic phospholipids. This is Chromosomal replication initiator protein DnaA 2 from Chlamydia pneumoniae (Chlamydophila pneumoniae).